Reading from the N-terminus, the 458-residue chain is Exodeoxyribonuclease 7 large subunit (458 aa).

Belongs to the XseA family. In terms of assembly, heterooligomer composed of large and small subunits.

The protein localises to the cytoplasm. The catalysed reaction is Exonucleolytic cleavage in either 5'- to 3'- or 3'- to 5'-direction to yield nucleoside 5'-phosphates.. In terms of biological role, bidirectionally degrades single-stranded DNA into large acid-insoluble oligonucleotides, which are then degraded further into small acid-soluble oligonucleotides. The protein is Exodeoxyribonuclease 7 large subunit of Yersinia enterocolitica serotype O:8 / biotype 1B (strain NCTC 13174 / 8081).